The primary structure comprises 385 residues: Nonsense-mediated mRNA decay factor SMG9 (385 aa).

The disordered stretch occupies residues Met-1–Lys-32.

It belongs to the SMG9 family.

Its function is as follows. Involved in nonsense-mediated decay (NMD) of mRNAs containing premature stop codons. Probable component of kinase complex containing smg-1 and recruited to stalled ribosomes. The sequence is that of Nonsense-mediated mRNA decay factor SMG9 (smg-9) from Caenorhabditis elegans.